Consider the following 128-residue polypeptide: MAIWQGASRRLSTGAKVWRAAKKHKREMGRPAAETQISDRIKRKIVRCRGANLKVKLEKTNYANVFDQANKVCKKVAVTKVLDNKANKHYIRRNVMTKGAIIETEMGKAKVTSRPGQDGVVNAVLLTE.

This sequence belongs to the eukaryotic ribosomal protein eS8 family. In terms of assembly, part of the 30S ribosomal subunit.

This is Small ribosomal subunit protein eS8 from Methanococcus maripaludis (strain C7 / ATCC BAA-1331).